The chain runs to 233 residues: ATP-dependent Clp protease proteolytic subunit 1 (233 aa).

Ser136 functions as the Nucleophile in the catalytic mechanism. The active site involves His161.

Belongs to the peptidase S14 family. Fourteen ClpP subunits assemble into 2 heptameric rings which stack back to back to give a disk-like structure with a central cavity, resembling the structure of eukaryotic proteasomes.

Its subcellular location is the cytoplasm. The catalysed reaction is Hydrolysis of proteins to small peptides in the presence of ATP and magnesium. alpha-casein is the usual test substrate. In the absence of ATP, only oligopeptides shorter than five residues are hydrolyzed (such as succinyl-Leu-Tyr-|-NHMec, and Leu-Tyr-Leu-|-Tyr-Trp, in which cleavage of the -Tyr-|-Leu- and -Tyr-|-Trp bonds also occurs).. In terms of biological role, cleaves peptides in various proteins in a process that requires ATP hydrolysis. Has a chymotrypsin-like activity. Plays a major role in the degradation of misfolded proteins. The chain is ATP-dependent Clp protease proteolytic subunit 1 from Bifidobacterium longum (strain NCC 2705).